A 477-amino-acid chain; its full sequence is Ribulose bisphosphate carboxylase large chain (477 aa).

Residues 1 to 2 constitute a propeptide that is removed on maturation; sequence MS. Proline 3 carries the N-acetylproline modification. At lysine 14 the chain carries N6,N6,N6-trimethyllysine. Positions 123 and 173 each coordinate substrate. Lysine 175 serves as the catalytic Proton acceptor. Lysine 177 is a substrate binding site. 3 residues coordinate Mg(2+): lysine 201, aspartate 203, and glutamate 204. Position 201 is an N6-carboxylysine (lysine 201). The active-site Proton acceptor is histidine 294. Substrate contacts are provided by arginine 295, histidine 327, and serine 379.

This sequence belongs to the RuBisCO large chain family. Type I subfamily. As to quaternary structure, heterohexadecamer of 8 large chains and 8 small chains; disulfide-linked. The disulfide link is formed within the large subunit homodimers. Requires Mg(2+) as cofactor. Post-translationally, the disulfide bond which can form in the large chain dimeric partners within the hexadecamer appears to be associated with oxidative stress and protein turnover.

The protein localises to the plastid. Its subcellular location is the chloroplast. The enzyme catalyses 2 (2R)-3-phosphoglycerate + 2 H(+) = D-ribulose 1,5-bisphosphate + CO2 + H2O. The catalysed reaction is D-ribulose 1,5-bisphosphate + O2 = 2-phosphoglycolate + (2R)-3-phosphoglycerate + 2 H(+). Functionally, ruBisCO catalyzes two reactions: the carboxylation of D-ribulose 1,5-bisphosphate, the primary event in carbon dioxide fixation, as well as the oxidative fragmentation of the pentose substrate in the photorespiration process. Both reactions occur simultaneously and in competition at the same active site. The polypeptide is Ribulose bisphosphate carboxylase large chain (Nicotiana sylvestris (Wood tobacco)).